Consider the following 583-residue polypeptide: Protein NRT1/ PTR FAMILY 5.1 (583 aa).

Residues 74–94 traverse the membrane as a helical segment; it reads WSGAVWITPIAGAYIADSYIG. A Phosphothreonine modification is found at threonine 98. 10 helical membrane-spanning segments follow: residues 99–119, 134–154, 182–202, 210–230, 320–340, 361–381, 405–425, 446–466, 485–505, and 529–549; these read FTASSLIYVLGMILLTMAVTV, ASSLQVTFFYISLYTIAIGAG, FFNWWMFSSFLGALFATLGLV, WGLGYGIPTVGLLVSLVVFYI, VLGLIFIWLVTLIPSTLWAQV, IPAASLGSFVTLSMLLSVPMY, LGVGFAIQIVAIAIASAVEVK, IFWLLPQYSLLGIGDVFNAIG, TFFTSGIGLGNFLNSFLVTMI, and YYYGFLVVISIVNMGLFVWAA.

The protein belongs to the major facilitator superfamily. Proton-dependent oligopeptide transporter (POT/PTR) (TC 2.A.17) family. As to expression, expressed in flowers. Detected in stems, leaves and siliques.

It is found in the membrane. This is Protein NRT1/ PTR FAMILY 5.1 (NPF5.1) from Arabidopsis thaliana (Mouse-ear cress).